The following is a 333-amino-acid chain: MPTSTWNRHHVLSLADFTAAEYDIVLKTAASFQEVLSRRTKKVPALQGQVVANLFFEPSTRTRSSFELAAKRLSADTLNFAASTSSMTKGETILDTAKTYLAMGTDIMVIRHKEAGVPNAIAQEMDRLGVRVSVLNAGDGQHEHPSQGLLDLFTICSLVDPANPRLELLQGKKIAIVGDILHSRVARSNIWSLIASGAQVHLAAPPTLLPKLFAEYIFGEETAPPGQLFIHWQLEPALQDADFVMTLRLQKERMTAHLLPSLREYHQLFGITRAKLQLCQPNVKVLHPGPVNRGVEISSDLMDDPEFSLIQSQVTSGVAVRMALLYLIGSGKT.

Carbamoyl phosphate is bound by residues Arg-61 and Thr-62. Lys-89 provides a ligand contact to L-aspartate. Arg-111, His-144, and Gln-147 together coordinate carbamoyl phosphate. L-aspartate-binding residues include Arg-184 and Arg-248. Carbamoyl phosphate-binding residues include Gly-289 and Pro-290.

The protein belongs to the aspartate/ornithine carbamoyltransferase superfamily. ATCase family. As to quaternary structure, heterododecamer (2C3:3R2) of six catalytic PyrB chains organized as two trimers (C3), and six regulatory PyrI chains organized as three dimers (R2).

The enzyme catalyses carbamoyl phosphate + L-aspartate = N-carbamoyl-L-aspartate + phosphate + H(+). The protein operates within pyrimidine metabolism; UMP biosynthesis via de novo pathway; (S)-dihydroorotate from bicarbonate: step 2/3. Catalyzes the condensation of carbamoyl phosphate and aspartate to form carbamoyl aspartate and inorganic phosphate, the committed step in the de novo pyrimidine nucleotide biosynthesis pathway. This Trichormus variabilis (strain ATCC 29413 / PCC 7937) (Anabaena variabilis) protein is Aspartate carbamoyltransferase catalytic subunit.